Consider the following 210-residue polypeptide: T-cell surface glycoprotein CD8 beta chain (210 aa).

Positions methionine 1–valine 21 are cleaved as a signal peptide. The Ig-like V-type domain maps to leucine 22–leucine 132. The Extracellular segment spans residues leucine 22 to leucine 170. A disulfide bond links cysteine 41 and cysteine 116. N-linked (GlcNAc...) asparagine glycosylation occurs at asparagine 102. Positions proline 139 to valine 161 are disordered. Residues leucine 171 to isoleucine 191 form a helical membrane-spanning segment. Residues histidine 192–lysine 210 are Cytoplasmic-facing.

Forms disulfide-linked heterodimers with CD8A at the cell surface. Interacts with CD3D; this interaction couples TCR-CD3 with CD8. Interacts with LCK. Post-translationally, phosphorylated as a consequence of T-cell activation. Palmitoylated at the cytoplasmic tail and thereby targets the heterodimer CD8A/CD8B to lipid rafts unlike CD8A homodimers.

The protein localises to the cell membrane. In terms of biological role, integral membrane glycoprotein that plays an essential role in the immune response and serves multiple functions in responses against both external and internal offenses. In T-cells, functions primarily as a coreceptor for MHC class I molecule:peptide complex. The antigens presented by class I peptides are derived from cytosolic proteins while class II derived from extracellular proteins. Interacts simultaneously with the T-cell receptor (TCR) and the MHC class I proteins presented by antigen presenting cells (APCs). In turn, recruits the Src kinase LCK to the vicinity of the TCR-CD3 complex. A palmitoylation site in the cytoplasmic tail of CD8B chain contributes to partitioning of CD8 into the plasma membrane lipid rafts where signaling proteins are enriched. Once LCK recruited, it initiates different intracellular signaling pathways by phosphorylating various substrates ultimately leading to lymphokine production, motility, adhesion and activation of cytotoxic T-lymphocytes (CTLs). Additionally, plays a critical role in thymic selection of CD8+ T-cells. The chain is T-cell surface glycoprotein CD8 beta chain (CD8B) from Felis catus (Cat).